The sequence spans 217 residues: Resolvase homolog YneB (217 aa).

Residues 2-147 (KALIYARVST…RGMKRAVKNG (146 aa)) form the Resolvase/invertase-type recombinase catalytic domain. Residue S10 is the O-(5'-phospho-DNA)-serine intermediate of the active site.

This sequence belongs to the site-specific recombinase resolvase family.

This chain is Resolvase homolog YneB (yneB), found in Bacillus subtilis (strain 168).